A 158-amino-acid polypeptide reads, in one-letter code: Nascent polypeptide-associated complex subunit beta (158 aa).

Disordered regions lie at residues 1–40 (MDQA…DKKL) and 119–158 (ESYQ…SKVE). Residues 16–31 (GKGKGTPRRKTKKVHK) show a composition bias toward basic residues. The NAC-A/B domain maps to 34–99 (GTDDKKLQTS…GEDKELTELV (66 aa)). Over residues 137-152 (DDDDDDEIPDLVEGEN) the composition is skewed to acidic residues.

The protein belongs to the NAC-beta family. Part of the nascent polypeptide-associated complex (NAC), consisting of EGD2 and EGD1. NAC associates with ribosomes via EGD1.

The protein resides in the cytoplasm. It localises to the nucleus. Component of the nascent polypeptide-associated complex (NAC), a dynamic component of the ribosomal exit tunnel, protecting the emerging polypeptides from interaction with other cytoplasmic proteins to ensure appropriate nascent protein targeting. The NAC complex also promotes mitochondrial protein import by enhancing productive ribosome interactions with the outer mitochondrial membrane and blocks the inappropriate interaction of ribosomes translating non-secretory nascent polypeptides with translocation sites in the membrane of the endoplasmic reticulum. EGD1 may act as a transcription factor that exert a negative effect on the expression of several genes that are transcribed by RNA polymerase II. This Ajellomyces capsulatus (strain NAm1 / WU24) (Darling's disease fungus) protein is Nascent polypeptide-associated complex subunit beta (EGD1).